The chain runs to 160 residues: Thioredoxin-like protein 4A homolog (160 aa).

A disordered region spans residues 132–160; the sequence is KFLKKKKKKKNKKKQKKKIKKIKKKIKNN. Residues 133–160 are compositionally biased toward basic residues; it reads FLKKKKKKKNKKKQKKKIKKIKKKIKNN.

This sequence belongs to the DIM1 family. In terms of assembly, component of the precatalytic spliceosome (spliceosome B complex). Component of the U5 snRNP complex. Component of the U4/U6-U5 tri-snRNP complex.

It is found in the nucleus. In terms of biological role, plays a role in pre-mRNA splicing as component of the U5 snRNP and U4/U6-U5 tri-snRNP complexes that are involved in spliceosome assembly, and as component of the precatalytic spliceosome (spliceosome B complex). This chain is Thioredoxin-like protein 4A homolog (txnl4a), found in Dictyostelium discoideum (Social amoeba).